Here is a 473-residue protein sequence, read N- to C-terminus: Monocarboxylate transporter 4 (473 aa).

The Cytoplasmic portion of the chain corresponds to 1-17; sequence MGAVVVDDGPSGVKAPD. A helical membrane pass occupies residues 18 to 38; the sequence is GGWGWAVLFGCFIITGFSYAF. At 39–61 the chain is on the extracellular side; it reads PKAVSVFFKELIREFGVGYSDTA. A helical membrane pass occupies residues 62–82; sequence WISSILLAMLYGTGPLCSVCV. Topologically, residues 83-91 are cytoplasmic; that stretch reads NRFGCRPVM. A helical membrane pass occupies residues 92–112; the sequence is LVGGLFASMGMVIASFCTSIV. Residues 113–115 lie on the Extracellular side of the membrane; it reads QIY. A helical transmembrane segment spans residues 116–136; the sequence is LTAGVITGLGLALNFQPSLIM. Residues 137-149 are Cytoplasmic-facing; it reads LNRYFDKRRPLAN. A helical transmembrane segment spans residues 150–170; the sequence is GLSAAGSPVFLCALSPLGQIL. The Extracellular segment spans residues 171–179; the sequence is QHEYGWRGG. Residues 180–200 traverse the membrane as a helical segment; it reads FLILGGMLLNCCVCGALMRPL. The Cytoplasmic segment spans residues 201-231; it reads EPPKKSEATKEPAEKKAKKKLLDFSVFKDGG. Residues 232–252 traverse the membrane as a helical segment; the sequence is FVIYTLAASIMVLGLFVPPVF. Residues 253-268 are Extracellular-facing; it reads VVSYAKDLGYQDTKAA. The helical transmembrane segment at 269-289 threads the bilayer; sequence FLLTILGFIDIFARPICGMVA. At 290–297 the chain is on the cytoplasmic side; sequence GLKWVRPR. The chain crosses the membrane as a helical span at residues 298–318; the sequence is CVYLFSFAMIFNGFTDLMGSM. The Extracellular segment spans residues 319–321; it reads SVD. Residues 322–342 traverse the membrane as a helical segment; it reads YGGLVVFCIFFGISYGMVGAL. The Cytoplasmic portion of the chain corresponds to 343 to 358; sequence QFEVLMAIVGTQKFSS. Residues 359-379 traverse the membrane as a helical segment; the sequence is AIGLVLLAEAMAVLIGPPSAG. Residues 380 to 388 are Extracellular-facing; that stretch reads KLLDLTRRY. Residues 389 to 409 traverse the membrane as a helical segment; the sequence is MFVFIIAGIEVTTSALVLALG. The Cytoplasmic portion of the chain corresponds to 410 to 473; sequence NFFCIKKKPA…EVVTNPETCV (64 aa). Residues 421-447 form a disordered region; the sequence is PHTKEAAAEREELNKSEDKTPEDAKVD. Basolateral sorting signal regions lie at residues 427 to 449 and 449 to 473; these read AAEREELNKSEDKTPEDAKVDSI and IEVEQFLKDEPEKNGEVVTNPETCV.

It belongs to the major facilitator superfamily. Monocarboxylate porter (TC 2.A.1.13) family. In terms of assembly, interacts with BSG; interaction mediates SLC16A3 targeting to the plasma membrane.

It is found in the cell membrane. Its subcellular location is the basolateral cell membrane. It catalyses the reaction (S)-lactate(in) + H(+)(in) = (S)-lactate(out) + H(+)(out). The enzyme catalyses pyruvate(out) + H(+)(out) = pyruvate(in) + H(+)(in). Functionally, proton-dependent transporter of monocarboxylates such as L-lactate and pyruvate. Plays a predominant role in the L-lactate efflux from highly glycolytic cells. The protein is Monocarboxylate transporter 4 (SLC16A3) of Gallus gallus (Chicken).